The chain runs to 122 residues: Large ribosomal subunit protein uL14 (122 aa).

This sequence belongs to the universal ribosomal protein uL14 family. As to quaternary structure, part of the 50S ribosomal subunit. Forms a cluster with proteins L3 and L19. In the 70S ribosome, L14 and L19 interact and together make contacts with the 16S rRNA in bridges B5 and B8.

Binds to 23S rRNA. Forms part of two intersubunit bridges in the 70S ribosome. The polypeptide is Large ribosomal subunit protein uL14 (Pediococcus pentosaceus (strain ATCC 25745 / CCUG 21536 / LMG 10740 / 183-1w)).